Here is a 341-residue protein sequence, read N- to C-terminus: Gibberellin 2-beta-dioxygenase 2 (341 aa).

A Fe2OG dioxygenase domain is found at 179–283 (KSDSCLRLNH…RISMIYFGGP (105 aa)). His207, Asp209, and His264 together coordinate Fe cation. Arg274 is an active-site residue. Arg274 provides a ligand contact to 2-oxoglutarate.

The protein belongs to the iron/ascorbate-dependent oxidoreductase family. GA2OX subfamily. Requires Fe(2+) as cofactor. As to expression, preferentially expressed in flowers, siliques, and upper stems. Expressed in cotyledons, at the base of the shoot apical meristem and developing leaf primordia.

The enzyme catalyses gibberellin A1 + 2-oxoglutarate + O2 = gibberellin A8 + succinate + CO2. It participates in plant hormone biosynthesis; gibberellin biosynthesis. Its function is as follows. Catalyzes the 2-beta-hydroxylation of several biologically active gibberellins, leading to the homeostatic regulation of their endogenous level. Catabolism of gibberellins (GAs) plays a central role in plant development. Converts GA9/GA20 to GA51/GA29 and GA4/GA1 to GA34/GA8. This is Gibberellin 2-beta-dioxygenase 2 (GA2OX2) from Arabidopsis thaliana (Mouse-ear cress).